The sequence spans 301 residues: Ribosomal protein L11 methyltransferase (301 aa).

Threonine 147, glycine 168, aspartate 190, and asparagine 237 together coordinate S-adenosyl-L-methionine.

The protein belongs to the methyltransferase superfamily. PrmA family.

It localises to the cytoplasm. It carries out the reaction L-lysyl-[protein] + 3 S-adenosyl-L-methionine = N(6),N(6),N(6)-trimethyl-L-lysyl-[protein] + 3 S-adenosyl-L-homocysteine + 3 H(+). Methylates ribosomal protein L11. The sequence is that of Ribosomal protein L11 methyltransferase from Synechococcus sp. (strain RCC307).